A 177-amino-acid polypeptide reads, in one-letter code: MEKDPLTIIEQAEDHFIERIAENMHAFGMPSTVGRVLGIIYMNRKPMTLTELSEATGMSKTRMSQVVREMLDANIAEKVFEKGVRKDLYEVEQDYYQTFITLFSATWSKVVSKNKMMHKKLNRELLSVLDEELTPEAEEKVNELLKELKEWLDYYNWLSRLIEFFESEDIFKYVPKP.

A DNA-binding region (H-T-H motif) is located at residues Leu49 to Ala73.

This sequence belongs to the GbsR family.

This Bacillus subtilis (strain 168) protein is Putative HTH-type transcriptional regulator YvaV (yvaV).